A 210-amino-acid chain; its full sequence is Chaperone protein TorD (210 aa).

This sequence belongs to the TorD/DmsD family. TorD subfamily.

Its subcellular location is the cytoplasm. Its function is as follows. Involved in the biogenesis of TorA. Acts on TorA before the insertion of the molybdenum cofactor and, as a result, probably favors a conformation of the apoenzyme that is competent for acquiring the cofactor. The protein is Chaperone protein TorD of Salmonella paratyphi B (strain ATCC BAA-1250 / SPB7).